We begin with the raw amino-acid sequence, 272 residues long: Neurogenin-2 (272 aa).

Positions 30 to 69 are disordered; the sequence is LTPLSSSADEEEEEEPGASGGARRQRGAEAGQGARGGVAA. The bHLH domain maps to 112-164; that stretch reads TRRLKANNRERNRMHNLNAALDALREVLPTFPEDAKLTKIETLRFAHNYIWAL. Residues 197-239 show a composition bias toward low complexity; it reads ASAALSSSGDSPSPASTWSCTNSPAPSSSVSSNSTSPYSCTLS. The disordered stretch occupies residues 197–264; that stretch reads ASAALSSSGD…PPDKHRYAPH (68 aa).

Efficient DNA binding requires dimerization with another bHLH protein.

It is found in the nucleus. In terms of biological role, transcriptional regulator. Involved in neuronal differentiation. Activates transcription by binding to the E box (5'-CANNTG-3'). This chain is Neurogenin-2 (NEUROG2), found in Homo sapiens (Human).